The sequence spans 264 residues: Phosphatidylglycerol--prolipoprotein diacylglyceryl transferase (264 aa).

7 consecutive transmembrane segments (helical) span residues 14–34, 57–77, 89–109, 127–147, 176–196, 202–222, and 235–255; these read VGPL…LLFM, LLLY…VLFF, ILAI…VLVA, FIAP…FING, QLYQ…VYSA, KAVS…AEFF, and LGLS…VGLL. Position 140 (Arg-140) interacts with a 1,2-diacyl-sn-glycero-3-phospho-(1'-sn-glycerol).

Belongs to the Lgt family.

It is found in the cell inner membrane. It catalyses the reaction L-cysteinyl-[prolipoprotein] + a 1,2-diacyl-sn-glycero-3-phospho-(1'-sn-glycerol) = an S-1,2-diacyl-sn-glyceryl-L-cysteinyl-[prolipoprotein] + sn-glycerol 1-phosphate + H(+). The protein operates within protein modification; lipoprotein biosynthesis (diacylglyceryl transfer). In terms of biological role, catalyzes the transfer of the diacylglyceryl group from phosphatidylglycerol to the sulfhydryl group of the N-terminal cysteine of a prolipoprotein, the first step in the formation of mature lipoproteins. This Aromatoleum aromaticum (strain DSM 19018 / LMG 30748 / EbN1) (Azoarcus sp. (strain EbN1)) protein is Phosphatidylglycerol--prolipoprotein diacylglyceryl transferase.